Consider the following 126-residue polypeptide: Large ribosomal subunit protein bL12 (126 aa).

This sequence belongs to the bacterial ribosomal protein bL12 family. Homodimer. Part of the ribosomal stalk of the 50S ribosomal subunit. Forms a multimeric L10(L12)X complex, where L10 forms an elongated spine to which 2 to 4 L12 dimers bind in a sequential fashion. Binds GTP-bound translation factors.

Its function is as follows. Forms part of the ribosomal stalk which helps the ribosome interact with GTP-bound translation factors. Is thus essential for accurate translation. The sequence is that of Large ribosomal subunit protein bL12 from Nitrosococcus oceani (strain ATCC 19707 / BCRC 17464 / JCM 30415 / NCIMB 11848 / C-107).